The following is a 403-amino-acid chain: DNA primase DnaG (403 aa).

The Toprim domain occupies Asp-172 to Pro-248. Mg(2+)-binding residues include Glu-178, Asp-222, and Asp-224. The disordered stretch occupies residues Ala-279 to Ala-300.

The protein belongs to the archaeal DnaG primase family. In terms of assembly, forms a ternary complex with MCM helicase and DNA. Component of the archaeal exosome complex. Mg(2+) is required as a cofactor.

The enzyme catalyses ssDNA + n NTP = ssDNA/pppN(pN)n-1 hybrid + (n-1) diphosphate.. Functionally, RNA polymerase that catalyzes the synthesis of short RNA molecules used as primers for DNA polymerase during DNA replication. Also part of the exosome, which is a complex involved in RNA degradation. Acts as a poly(A)-binding protein that enhances the interaction between heteromeric, adenine-rich transcripts and the exosome. The protein is DNA primase DnaG of Pyrobaculum neutrophilum (strain DSM 2338 / JCM 9278 / NBRC 100436 / V24Sta) (Thermoproteus neutrophilus).